A 227-amino-acid chain; its full sequence is Ribose-5-phosphate isomerase A (227 aa).

Residues 28-31, 85-88, and 98-101 each bind substrate; these read TGST, DGAD, and KGGG. Glu107 acts as the Proton acceptor in catalysis. Substrate is bound at residue Lys125.

This sequence belongs to the ribose 5-phosphate isomerase family. In terms of assembly, homodimer.

The catalysed reaction is aldehydo-D-ribose 5-phosphate = D-ribulose 5-phosphate. It participates in carbohydrate degradation; pentose phosphate pathway; D-ribose 5-phosphate from D-ribulose 5-phosphate (non-oxidative stage): step 1/1. In terms of biological role, catalyzes the reversible conversion of ribose-5-phosphate to ribulose 5-phosphate. In Limosilactobacillus reuteri (strain DSM 20016) (Lactobacillus reuteri), this protein is Ribose-5-phosphate isomerase A.